The following is a 786-amino-acid chain: Cadherin-9 (786 aa).

The N-terminal stretch at 1–21 (MRTYSCLQLVIWTCIFHMVDN) is a signal peptide. An N-linked (GlcNAc...) asparagine glycan is attached at Asn21. A propeptide spanning residues 22-52 (STLQGKDSSHFLRRIVNLKKDEGKMLHRAKR) is cleaved from the precursor. At 22 to 614 (STLQGKDSSH…MLAAGLSTGA (593 aa)) the chain is on the extracellular side. Cadherin domains are found at residues 54-158 (WMWN…EPKF), 159-267 (TKDL…PPRF), 268-382 (PQST…PPVF), 383-487 (SKLS…APEF), and 487-604 (FATY…AEAL). An N-linked (GlcNAc...) asparagine glycan is attached at Asn254. N-linked (GlcNAc...) asparagine glycosylation is found at Asn454 and Asn535. A helical membrane pass occupies residues 615–635 (LIAILLCVVILLTLIVLFAAL). At 636–786 (KRQRKKEPLI…AEMYGGNDSD (151 aa)) the chain is on the cytoplasmic side. Phosphoserine is present on Ser785.

It is found in the cell membrane. In terms of biological role, cadherins are calcium-dependent cell adhesion proteins. They preferentially interact with themselves in a homophilic manner in connecting cells; cadherins may thus contribute to the sorting of heterogeneous cell types. In Mus musculus (Mouse), this protein is Cadherin-9 (Cdh9).